Consider the following 497-residue polypeptide: GTPase-activating protein GYP8 (497 aa).

Positions 69-281 (FVNNSLRKDC…QIFDMTISMQ (213 aa)) constitute a Rab-GAP TBC domain.

This Saccharomyces cerevisiae (strain ATCC 204508 / S288c) (Baker's yeast) protein is GTPase-activating protein GYP8 (GYP8).